The sequence spans 853 residues: Transcription factor macR (853 aa).

Positions 18–45 (CIVCRRRKVRCGREQPECANCVRMKENC) form a DNA-binding region, zn(2)-C6 fungal-type. 4 disordered regions span residues 54–122 (ESTG…PYPT), 138–166 (ANAPQINGSSTTTRDPSPAPSTSLFPTPS), 734–775 (ASDL…AGNK), and 833–853 (LGSQSTASGRRGLPDGLDFPG). 3 stretches are compositionally biased toward polar residues: residues 104-116 (PQVSANASPSPQR), 141-163 (PQINGSSTTTRDPSPAPSTSLFP), and 738-752 (RATSDQPSSDVSSTT).

It is found in the nucleus. Its function is as follows. Transcription factor that regulates the expression of the gene cluster that mediates the biosynthesis of macrophorins, isoprenoid epoxycyclohexenones containing cyclized drimane moieties. This Penicillium terrestre protein is Transcription factor macR.